The sequence spans 297 residues: PAK4-inhibitor INKA2 (297 aa).

Disordered stretches follow at residues 82–109 (GRGPARPTVCSPSSQPSLGSSTKFPSHR), 175–200 (LEKGGEKGETGGAREPKGEKGQPQEL), and 234–285 (TPMV…LEHS). Positions 92-102 (SPSSQPSLGSS) are enriched in low complexity. The inka box stretch occupies residues 137-180 (EPDDWTSTLMSRGRNRQPLVLGDNVFADLVGNWLDLPELEKGGE). The span at 244 to 253 (RSQKVKKRSL) shows a compositional bias: basic residues.

The protein belongs to the INKA family. As to quaternary structure, interacts with PAK4.

It localises to the nucleus. Functionally, inhibitor of the serine/threonine-protein kinase PAK4. Acts by binding PAK4 in a substrate-like manner, inhibiting the protein kinase activity. The chain is PAK4-inhibitor INKA2 from Homo sapiens (Human).